The chain runs to 365 residues: MSTAVTITAPSVKHILLDSLVVMKIVKHVDSELHAGISEVSGDACAGVLTGLVFLEDSRLEITNCFPTVRNEPVMDDDANAAQQYEEQKQHEMLDMLRKFRTMNIDYEIVGFYQSHQFGAGFSHDLVESMFDYQAMGPENVVLIYDPIKTRQGQLSLRAWRLSTAALDLASKNDWRPELVKAAGLTYQNMFEELPIIIKSSYLNNVLMSELSLAKSCSSDKYSTRHFDLGSKKSLEKSVRAMMANVDELNKSIQSLTKYTIDKQRHDNMVFSLTQKRQQENESRVARGDPTIPMDDIKRIKAPQLQTRNGLLDELLASFDTNALADFSKTVTSENITKMFIAEAVAEEKVAGTKDRTLSSVSSTR.

One can recognise an MPN domain in the interval 15-166 (ILLDSLVVMK…LRAWRLSTAA (152 aa)).

Belongs to the eIF-3 subunit H family. Component of the eukaryotic translation initiation factor 3 (eIF-3) complex.

It localises to the cytoplasm. Component of the eukaryotic translation initiation factor 3 (eIF-3) complex, which is involved in protein synthesis of a specialized repertoire of mRNAs and, together with other initiation factors, stimulates binding of mRNA and methionyl-tRNAi to the 40S ribosome. The eIF-3 complex specifically targets and initiates translation of a subset of mRNAs involved in cell proliferation. This chain is Eukaryotic translation initiation factor 3 subunit H, found in Caenorhabditis elegans.